We begin with the raw amino-acid sequence, 473 residues long: MSFSRRQFLQASGLAVCLGSLSSSVRAGSVSDRKLPIPPLLESRNGQPLFVTLQKVHWAFDGTQKTEVWGINGSMPGPTIKVKSGDDVKLIYSNRLNEPVSMTVSGLLVPGTQIGGAARMMSPGAYWSPVLPIRQKAATCWYHANTPFKMAPHVYNGLVGMWIVEDEESKSLPLPKHYGVNDFPIILQDKRLDNFGTPQYDKEAATEGFYGDTLLVNGCEDPYIEVSRGWIRLRLVNASNARRYELSANDGRSLYLIASDQGLLTSPVELKSIPMAPGERREILIDLSEGEEVTITAGQSAGFMDRLRGIFEPSNLLRNTNVLTIKPTGLMSLVTDKVPQQLVVDDTQITTSIQPRTIQLQNSPPGINNARWELSRIDLVGKQNGWERWLVTVETPQPFHIEGARFKVINHDGQKPAPADFGWKDTVWIEKQSELLVELKQPSYSHFPFVYYSQILENADKGIAGQMEITPSE.

Residues 1 to 27 (MSFSRRQFLQASGLAVCLGSLSSSVRA) constitute a signal peptide (tat-type signal).

This sequence belongs to the FtsP family. Post-translationally, predicted to be exported by the Tat system. The position of the signal peptide cleavage has not been experimentally proven.

It is found in the periplasm. Functionally, cell division protein that is required for growth during stress conditions. May be involved in protecting or stabilizing the divisomal assembly under conditions of stress. The chain is Cell division protein FtsP from Proteus mirabilis (strain HI4320).